The following is a 1561-amino-acid chain: MLSWRLQTGSEKAELQELNARLYDYVCRVRELERENLLLEEELRSRLSREDRWAEDQALYAEEARSLRQQLDELNWSTALAEGERDALRRELLELQREGVEAGTARSRLDAELGAQRRELEEALGARAALEALLGRLETERRDLDAAHERQVRDLRARAASLTMHFRARATSPAAPPPRLRDVHDSYALLVAESWRESVQLYEDEVRELEQALRRGQESRLQAEDEARLCAQEADALRNQALELEQLRARLEDELLRMREEYGMQAEERQRVIDSLEDEKEALTLAMADRLRDYQELLQVKTGLSLEVATYRALLEGESNPEILIWTENIENVPQEPRNTSYRYTNSVLQRKNEKNLFPRRKTPWAAVNHSSASYSNWPGHLDSQTTTAVGSAARRGLLTSRHSSSATTSGQQKPLEKTISSRANLRPVTPTHGFLRNTDAQMKTLPHRSKVEGTGDTHARRATESVITRESYRGHQGHVAAGAVSSTPSNERTVILGKKLEAQATKEQERDRSGVIRIKPEEKMFDSKEKASEERNLRWEELTKLDRDARKRESRHLRDEAREKEALKERSVKEREVPISLEVSRGSRAEVSTIHLQSPGRKDVSHSGGREAETKETRFRLDTQDTASSLQSDSTTETIAESIVTTILKQFTQSPGAEEEATSFPDTKVTYVDRKEFPGDGKTKTEIVVESKLTDVVDVSDEAGLDYLLSKDVKEVGLKGKSTETMIGEMINLGLKGREGRAKVVNVEIVEEPMSYIGGGKIDFSTPFQVEEVDDVSPSPKGFVEEEDGEGETHMAFSMRPHQTKQPQGTIPHVEEVTEAGDSEGEQSYFVSTPDEYPGGHDREDDGSVYGQIHIEEESTIRYSWQDEIAQGTWRRKMRGDVGGEKPVKVLEVPALSLGGAIGSAHLKEEASGELRAEPTVIEKEIKIPHEFHTSIKGVFSSEPRHQLVEVIGQLEETLPERMKEELSALTRQSQGESGSVSVDVKKVQSAAGGSVTLMAEVNLSQTVDADQLDLEQLSRDEAGEIERAVESVVRESLAKRSSPVPRSPDREDGEEVPAGGILFKRWATRELYSPSGERDDAGQVSPSSDQRVTQGPVSATVEVTSPTGFVQSHVLEDVSQSVRHVKLGPTEMWRTEQVTFGGPTAQVVEVSGDFSEAVSSEGASRSVRHITLGPHQSQVSTEVIFRGSVPTWQETGDTEKPGPVVLSVGADISGSGRMPGSERSHTEKEIRFQGPVSGTAQVGGNFATEESVGSQTFVRSLQLGPKEGFREEIQFIAPIPDKVGWGEEDSEHTKVSLERATSIQRIDIVPQRYLASKQMAPQTLEFRDSEDMVMVEGSAGTIQATHNFTSDREILQNKENTFQRVISGSPPDSVGDTGAEVTANVSRSFRHIQIGPTEEEPSEYFVTGRPVSKTFVLDGSVASPGLVGGADGGSTPCRIALGPKETSFTFQMDLSDTRAIRSWTRDTGSEVEAHGVSHRGGWRIAHSRDERVASTGSGASPGDAHQAPGEKGTEQAGFDKTVQLQRMVDQRSVASDEKKVALLYLDNEEEEEEEGEGWF.

The segment at 1 to 10 is head; it reads MLSWRLQTGS. Residues 11–49 are coil 1A; it reads EKAELQELNARLYDYVCRVRELERENLLLEEELRSRLSR. Residues 11–320 are interaction with DMD and UTRN; the sequence is EKAELQELNA…YRALLEGESN (310 aa). Residues 11–322 enclose the IF rod domain; sequence EKAELQELNA…ALLEGESNPE (312 aa). Residues 50–58 form a linker 1 region; it reads EDRWAEDQA. The interval 59–163 is coil 1B; sequence LYAEEARSLR…DLRARAASLT (105 aa). The tract at residues 164–186 is linker 12; sequence MHFRARATSPAAPPPRLRDVHDS. The interval 187 to 300 is coil 2; sequence YALLVAESWR…LRDYQELLQV (114 aa). The tail stretch occupies residues 301–1561; sequence KTGLSLEVAT…EEEEEGEGWF (1261 aa). 2 stretches are compositionally biased toward polar residues: residues 371–390 and 401–421; these read SSAS…TTAV and SRHS…KTIS. Disordered regions lie at residues 371 to 421, 549 to 574, and 591 to 637; these read SSAS…KTIS, DARK…RSVK, and EVST…DSTT. A compositionally biased stretch (basic and acidic residues) spans 601–624; the sequence is GRKDVSHSGGREAETKETRFRLDT. The segment covering 625-637 has biased composition (polar residues); the sequence is QDTASSLQSDSTT. Position 653 is a phosphothreonine (Thr653). A phosphoserine mark is found at Ser655, Ser778, Ser780, Ser1044, Ser1049, Ser1077, Ser1087, Ser1179, and Ser1182. Disordered stretches follow at residues 1033–1061 and 1075–1099; these read SVVR…VPAG and SPSG…QGPV. A compositionally biased stretch (polar residues) spans 1086–1099; the sequence is VSPSSDQRVTQGPV. Residues 1152-1453 are interaction with TLN1 and VCL; the sequence is VSGDFSEAVS…GPKETSFTFQ (302 aa). The segment at 1212-1231 is disordered; the sequence is ADISGSGRMPGSERSHTEKE. Positions 1222-1231 are enriched in basic and acidic residues; that stretch reads GSERSHTEKE. The interval 1242–1557 is interaction with DMD and UTRN; it reads AQVGGNFATE…DNEEEEEEEG (316 aa). At Ser1425 the chain carries Phosphoserine. The residue at position 1481 (Arg1481) is an Omega-N-methylarginine. The disordered stretch occupies residues 1491 to 1519; that stretch reads DERVASTGSGASPGDAHQAPGEKGTEQAG.

This sequence belongs to the intermediate filament family. In terms of assembly, interacts with DES, DMD, DTNA, TLN1, UTRN and VCL. Isoform 1 and isoform 2 interact with GFAP and VIM. As to expression, isoform 2 and isoform 3 are detected in adult skeletal muscle, heart and bladder, whereas isoform 1 is only detected in adult bladder (at protein level).

The protein localises to the cytoplasm. The protein resides in the cytoskeleton. Its subcellular location is the cell junction. It is found in the adherens junction. Functionally, type-VI intermediate filament (IF) which plays an important cytoskeletal role within the muscle cell cytoskeleton. It forms heteromeric IFs with desmin and/or vimentin, and via its interaction with cytoskeletal proteins alpha-dystrobrevin, dystrophin, talin-1, utrophin and vinculin, is able to link these heteromeric IFs to adherens-type junctions, such as to the costameres, neuromuscular junctions, and myotendinous junctions within striated muscle cells. The polypeptide is Synemin (Mus musculus (Mouse)).